A 247-amino-acid polypeptide reads, in one-letter code: ATP synthase subunit a, chloroplastic (247 aa).

5 consecutive transmembrane segments (helical) span residues 38 to 58, 95 to 115, 134 to 154, 199 to 219, and 220 to 240; these read QVLI…ALAV, VPFI…GALL, INTT…AGLT, LVVV…VMFL, and GLFT…AYIG.

The protein belongs to the ATPase A chain family. In terms of assembly, F-type ATPases have 2 components, CF(1) - the catalytic core - and CF(0) - the membrane proton channel. CF(1) has five subunits: alpha(3), beta(3), gamma(1), delta(1), epsilon(1). CF(0) has four main subunits: a, b, b' and c.

The protein resides in the plastid. It is found in the chloroplast thylakoid membrane. In terms of biological role, key component of the proton channel; it plays a direct role in the translocation of protons across the membrane. The sequence is that of ATP synthase subunit a, chloroplastic from Helianthus annuus (Common sunflower).